Reading from the N-terminus, the 140-residue chain is Large ribosomal subunit protein uL11 (140 aa).

Belongs to the universal ribosomal protein uL11 family. In terms of assembly, part of the ribosomal stalk of the 50S ribosomal subunit. Interacts with L10 and the large rRNA to form the base of the stalk. L10 forms an elongated spine to which L12 dimers bind in a sequential fashion forming a multimeric L10(L12)X complex. One or more lysine residues are methylated.

Forms part of the ribosomal stalk which helps the ribosome interact with GTP-bound translation factors. The polypeptide is Large ribosomal subunit protein uL11 (Enterococcus faecalis (strain ATCC 700802 / V583)).